Reading from the N-terminus, the 278-residue chain is MYSSSSVSKRFVLVPIVVVVTTQLLLVRNVSSLNLTNSYLHHKCVVNQGKYKPGSKYEKSLDDIIQSFSNKDKDSYGFRTGYSMKAYGKEPDMVSITYQCRIDSRGPKCQSCVVTAGYELLRKRCPRYKEAIIWYDQCLVEFSSLDTSGQINYDDNFCMPSAKNLIGNSISLEERLHLLNNLTKIAVTKIDKNIEGIKKPVLYAAGEKRLGTKSLYGMVQCSADLSVQGCNECMLYYIVHFQECWESKQGVRVLSRSCNFRYELYPFISPKGSYYTKF.

The signal sequence occupies residues 1–32; sequence MYSSSSVSKRFVLVPIVVVVTTQLLLVRNVSS. Gnk2-homologous domains lie at 39–147 and 160–267; these read YLHH…SLDT and PSAK…LYPF.

The protein belongs to the cysteine-rich repeat secretory protein family.

Its subcellular location is the secreted. The protein is Putative cysteine-rich repeat secretory protein 19 (CRRSP19) of Arabidopsis thaliana (Mouse-ear cress).